Consider the following 658-residue polypeptide: Methionine--tRNA ligase (658 aa).

Positions 9 to 19 match the 'HIGH' region motif; sequence PYANGKAHVGH. Zn(2+)-binding residues include Cys140, Cys143, Cys152, and Cys156. The 'KMSKS' region motif lies at 322–326; that stretch reads TFSKS. Lys325 lines the ATP pocket. In terms of domain architecture, tRNA-binding spans 558-658; the sequence is DFQKLDIRIG…KEVEPGTRVC (101 aa).

This sequence belongs to the class-I aminoacyl-tRNA synthetase family. MetG type 1 subfamily. In terms of assembly, homodimer. Zn(2+) is required as a cofactor.

It localises to the cytoplasm. The catalysed reaction is tRNA(Met) + L-methionine + ATP = L-methionyl-tRNA(Met) + AMP + diphosphate. Its function is as follows. Is required not only for elongation of protein synthesis but also for the initiation of all mRNA translation through initiator tRNA(fMet) aminoacylation. The chain is Methionine--tRNA ligase from Archaeoglobus fulgidus (strain ATCC 49558 / DSM 4304 / JCM 9628 / NBRC 100126 / VC-16).